The chain runs to 1208 residues: Defective chorion protein, FC125 isoform (1208 aa).

A signal peptide spans 1–19 (MRLFSLLPLLALLVVQAAG). Disordered stretches follow at residues 23 to 60 (VTSD…PSIN), 184 to 212 (APAP…PDAP), and 268 to 294 (PAQP…EDPY). The span at 32–41 (AGSTTNSTTD) shows a compositional bias: polar residues. The span at 268–280 (PAQPAAAGTDAQA) shows a compositional bias: low complexity. 5 tandem repeats follow at residues 493 to 518 (QNPM…QQIQ), 519 to 544 (QNPM…QQIQ), 545 to 570 (QNPM…QQIQ), 571 to 596 (QNPM…QQIQ), and 597 to 622 (QNPM…QQIQ). Positions 493–788 (QNPMMMQQRQ…IQQQQRQMMQ (296 aa)) are 12 X 26 AA approximate tandem repeats, Glu, Met-rich. A 6; approximate repeat occupies 623 to 652 (QNPMMMQQRQWSEEQAKIQHDQQMAQQMAQ). One copy of the 7; approximate repeat lies at 653-680 (QGLMMTEQRQRQWSEDQAKIQQAQQMAQ). Residues 681-696 (QTPMMMPQMQQRQWTE) form an 8; approximate repeat. Residues 697-720 (DPQMVQQMQQRQWAEDQTRMQMAQ) form a 9; approximate repeat. The 10; approximate repeat unit spans residues 721 to 733 (QNPMMQQQRQMAE). The 11; approximate repeat unit spans residues 734-758 (NPQMMQQRQWSEEQTKIEQAQQMAQ). One copy of the 12; approximate repeat lies at 759-788 (QNQMMMQQMQQRQWSEDQAQIQQQQRQMMQ). Positions 828–839 (EDEDNKAEDDLV) are enriched in acidic residues. 3 disordered regions span residues 828–875 (EDED…SKSA), 944–1010 (RTIN…GSIF), and 1114–1208 (VQPP…DVDD). The span at 957–977 (SESQKSNSNPPTTLTPAPQEQ) shows a compositional bias: polar residues. Acidic residues-rich tracts occupy residues 1163-1178 (PEPD…EPSE) and 1194-1208 (NDID…DVDD).

It is found in the secreted. Its function is as follows. Required for proper assembly of the eggshell. This chain is Defective chorion protein, FC125 isoform, found in Drosophila melanogaster (Fruit fly).